The chain runs to 81 residues: Keratin-associated protein 19-3 (81 aa).

The protein belongs to the KRTAP type 19 family. Interacts with hair keratins.

In terms of biological role, in the hair cortex, hair keratin intermediate filaments are embedded in an interfilamentous matrix, consisting of hair keratin-associated proteins (KRTAP), which are essential for the formation of a rigid and resistant hair shaft through their extensive disulfide bond cross-linking with abundant cysteine residues of hair keratins. The matrix proteins include the high-sulfur and high-glycine-tyrosine keratins. The polypeptide is Keratin-associated protein 19-3 (KRTAP19-3) (Homo sapiens (Human)).